Here is a 354-residue protein sequence, read N- to C-terminus: 4-hydroxy-2-oxovalerate aldolase 5 (354 aa).

Residues 11-263 form the Pyruvate carboxyltransferase domain; that stretch reads VTVHDMCLRD…ETGCDLFKLM (253 aa). 19 to 20 contacts substrate; it reads RD. Aspartate 20 serves as a coordination point for Mn(2+). The active-site Proton acceptor is the histidine 23. Substrate is bound by residues serine 173 and histidine 202. The Mn(2+) site is built by histidine 202 and histidine 204. Tyrosine 293 is a binding site for substrate.

Belongs to the 4-hydroxy-2-oxovalerate aldolase family.

The enzyme catalyses (S)-4-hydroxy-2-oxopentanoate = acetaldehyde + pyruvate. The sequence is that of 4-hydroxy-2-oxovalerate aldolase 5 from Dechloromonas aromatica (strain RCB).